The sequence spans 149 residues: Nucleoside diphosphate kinase (149 aa).

6 residues coordinate ATP: lysine 9, phenylalanine 57, arginine 85, threonine 91, arginine 102, and asparagine 112. The active-site Pros-phosphohistidine intermediate is histidine 115.

It belongs to the NDK family. In terms of assembly, homotetramer. Mg(2+) serves as cofactor.

It localises to the cytoplasm. The catalysed reaction is a 2'-deoxyribonucleoside 5'-diphosphate + ATP = a 2'-deoxyribonucleoside 5'-triphosphate + ADP. It carries out the reaction a ribonucleoside 5'-diphosphate + ATP = a ribonucleoside 5'-triphosphate + ADP. Its function is as follows. Major role in the synthesis of nucleoside triphosphates other than ATP. The ATP gamma phosphate is transferred to the NDP beta phosphate via a ping-pong mechanism, using a phosphorylated active-site intermediate. The chain is Nucleoside diphosphate kinase from Trichodesmium erythraeum (strain IMS101).